The sequence spans 309 residues: Ribosomal RNA small subunit methyltransferase H (309 aa).

Residues 44–46 (GGH), Asp62, Phe102, Asp118, and Gln125 contribute to the S-adenosyl-L-methionine site. The disordered stretch occupies residues 289–309 (LEQQRNSRARSAKLRVAARSS).

This sequence belongs to the methyltransferase superfamily. RsmH family.

The protein localises to the cytoplasm. It carries out the reaction cytidine(1402) in 16S rRNA + S-adenosyl-L-methionine = N(4)-methylcytidine(1402) in 16S rRNA + S-adenosyl-L-homocysteine + H(+). In terms of biological role, specifically methylates the N4 position of cytidine in position 1402 (C1402) of 16S rRNA. This chain is Ribosomal RNA small subunit methyltransferase H, found in Synechococcus sp. (strain JA-3-3Ab) (Cyanobacteria bacterium Yellowstone A-Prime).